The chain runs to 89 residues: Acyl carrier protein MbtL (89 aa).

A Carrier domain is found at 7 to 82 (ESVSAALTEI…DLEAAIQAKV (76 aa)). Position 42 is an O-(pantetheine 4'-phosphoryl)serine (Ser42).

In terms of processing, 4'-phosphopantetheine is transferred from CoA to a specific serine of apo-ACP, leading to the activated holo-ACP form.

The protein localises to the cytoplasm. The protein operates within siderophore biosynthesis; mycobactin biosynthesis. Its function is as follows. Acyl carrier protein involved in the formation of acyl-S-ACP intermediates within the mycobactin biosynthesis process. The sequence is that of Acyl carrier protein MbtL (mbtL) from Mycobacterium sp. (strain MCS).